Reading from the N-terminus, the 133-residue chain is Large ribosomal subunit protein uL14 (133 aa).

It belongs to the universal ribosomal protein uL14 family. In terms of assembly, part of the 50S ribosomal subunit. Forms a cluster with proteins L3 and L24e, part of which may contact the 16S rRNA in 2 intersubunit bridges.

In terms of biological role, binds to 23S rRNA. Forms part of two intersubunit bridges in the 70S ribosome. In Nanoarchaeum equitans (strain Kin4-M), this protein is Large ribosomal subunit protein uL14.